Reading from the N-terminus, the 312-residue chain is MAKYDHLELVRLPEQLERRKHGGGSPPPDRDGPRHSAKLRDELNAARDEQRRRRKPEFVNPALILRVQMTGALQEADWEQLGLTVLSSDADRTLVLFASNDEMAEFRTRLDAYQRGAPAGQKNAPYNNFIGGIETIGSVEPRDRIGIRFREDGLVEMADFQDGQAYLIDIEIWDLGERRLRERKLDDIVRYIEARGAEVFDQYVGPSITMLRARLNGVLVRTLLTIEEVASVDLPPTPGIVTAEAMDMVLAEAPPLNTVDQTAPVIGIIDSGLNAHPFLDGIIAGCGFRQSPDRISGNLRTQFSVIPGQRFR.

Basic and acidic residues-rich tracts occupy residues 1-17 (MAKY…EQLE) and 28-39 (PDRDGPRHSAKL). The disordered stretch occupies residues 1 to 39 (MAKYDHLELVRLPEQLERRKHGGGSPPPDRDGPRHSAKL).

This is an uncharacterized protein from Sinorhizobium fredii (strain NBRC 101917 / NGR234).